The chain runs to 428 residues: MEILMASSNLIKQLQERGLVAQVTDEDALAERLAQGPIALYCGFDPTADSLHLGHLVPLLCLKRFQQAGHKPVALVGGATGLIGDPSFKAAERKLNTEETVQEWVAKIRKQVAPFLDFDCGENSAIAANNYDWFGSMNVLTFLRDIGKHFSVNQMINKEAVKQRLNRDDQGISFTEFSYNLLQGYDFACLNKLHGVALQIGGSDQWGNITSGIDLTRRLHQNQVFGLTVPLITKADGTKFGKTEGGAVWLDPKKTSPYKFYQFWINTADADVYRFLKFFTFMDIEEINALEEEDKNSGKAPRAQYVLAEQVTRLVHGEEGLVAAKRITECLFSGSLSALSEADFEQLAQDGVPMVEMEKGADLMQALVDAELQPSRGQARKTIASNAVTINGEKQSDPEYIFNDEDRLFGRYTLLRRGKKNYCLICWK.

Tyr-41 is an L-tyrosine binding site. A 'HIGH' region motif is present at residues 46–55 (PTADSLHLGH). Tyr-179 and Gln-183 together coordinate L-tyrosine. The short motif at 239–243 (KFGKT) is the 'KMSKS' region element. Residue Lys-242 coordinates ATP. The region spanning 361 to 418 (ADLMQALVDAELQPSRGQARKTIASNAVTINGEKQSDPEYIFNDEDRLFGRYTLLRRG) is the S4 RNA-binding domain.

Belongs to the class-I aminoacyl-tRNA synthetase family. TyrS type 1 subfamily. As to quaternary structure, homodimer.

The protein localises to the cytoplasm. It carries out the reaction tRNA(Tyr) + L-tyrosine + ATP = L-tyrosyl-tRNA(Tyr) + AMP + diphosphate + H(+). Catalyzes the attachment of tyrosine to tRNA(Tyr) in a two-step reaction: tyrosine is first activated by ATP to form Tyr-AMP and then transferred to the acceptor end of tRNA(Tyr). The polypeptide is Tyrosine--tRNA ligase (Salmonella paratyphi C (strain RKS4594)).